Consider the following 151-residue polypeptide: Endoribonuclease YbeY (151 aa).

Zn(2+) is bound by residues histidine 117, histidine 121, and histidine 127.

Belongs to the endoribonuclease YbeY family. Zn(2+) serves as cofactor.

The protein resides in the cytoplasm. Functionally, single strand-specific metallo-endoribonuclease involved in late-stage 70S ribosome quality control and in maturation of the 3' terminus of the 16S rRNA. In Alkaliphilus oremlandii (strain OhILAs) (Clostridium oremlandii (strain OhILAs)), this protein is Endoribonuclease YbeY.